The following is a 456-amino-acid chain: Solute carrier family 49 member 4 homolog (456 aa).

The Cytoplasmic segment spans residues 1–29 (MGLEWSSPGERQPLLFPGGPRSPRVFGRR). The short motif at 14 to 15 (LL) is the Di-leucine motif; mediates lysosomal localization element. Residues 30–50 (WLVLLLFSVLAFLQGLVWNSW) form a helical membrane-spanning segment. Residues 51–67 (GPIQISARTAYKFSGLD) lie on the Lumenal side of the membrane. The chain crosses the membrane as a helical span at residues 68–88 (IALLVLWGPIGFLPCFLFMWL). Over 89-95 (MDNRGLR) the chain is Cytoplasmic. Residues 96–116 (ITVLLTALLMVLGAGLRCVPV) form a helical membrane-spanning segment. Topologically, residues 117 to 123 (EDLAIRR) are lumenal. A helical transmembrane segment spans residues 124 to 144 (ILIHGGQLLNGFAGPTVMNAA). Residues 145–162 (PFLSTTWFAPDERATATA) lie on the Cytoplasmic side of the membrane. A helical transmembrane segment spans residues 163 to 183 (IASMLNYLGGACAFLVGPLVV). Topologically, residues 184–207 (PAPNSTSGLLLYSGSTDAIKDRIE) are lumenal. N-linked (GlcNAc...) asparagine glycosylation occurs at Asn-187. Residues 208 to 228 (AVMYAEFGIIFVVFAAILAYF) form a helical membrane-spanning segment. At 229–259 (PARPPVPPSVAAASRRLSYRTSIFRLLSNLR) the chain is on the cytoplasmic side. The chain crosses the membrane as a helical span at residues 260-280 (FLLIVLAYAIPLGFYSGWIGV). Residues 281-292 (LDLILTPVHVTQ) lie on the Lumenal side of the membrane. Residues 293 to 313 (VDAGWVGFWSIVGGCVVGIAV) traverse the membrane as a helical segment. Topologically, residues 314–326 (GRFADSIRGVLKP) are cytoplasmic. A helical membrane pass occupies residues 327 to 347 (ILLLLFSGATLSATWFTLTFL). Over 348–362 (SNVTHLPLTTATLYT) the chain is Lumenal. A glycan (N-linked (GlcNAc...) asparagine) is linked at Asn-349. A helical transmembrane segment spans residues 363-383 (SCILIGVFLNGTVPIFFELFV). Topologically, residues 384-392 (ETVYPIPEG) are cytoplasmic. The chain crosses the membrane as a helical span at residues 393–413 (IACGVVTFLSNIFMGVLLVFL). Residues 414-420 (TMYQMEL) lie on the Lumenal side of the membrane. The helical transmembrane segment at 421–441 (SWLNWCLTGSCFLSLFFIACF) threads the bilayer. Topologically, residues 442-456 (RESYDRLYLDVFVSV) are cytoplasmic.

Belongs to the major facilitator superfamily.

It is found in the lysosome membrane. It carries out the reaction pyridoxine(out) + n H(+)(out) = pyridoxine(in) + n H(+)(in). Its function is as follows. Mediates H(+)-dependent pyridoxine transport. This is Solute carrier family 49 member 4 homolog (slc49a4) from Xenopus laevis (African clawed frog).